The chain runs to 545 residues: Chaperonin GroEL (545 aa).

Residues 30–33, lysine 51, 87–91, glycine 415, and aspartate 496 contribute to the ATP site; these read TLGP and DGTTT.

The protein belongs to the chaperonin (HSP60) family. As to quaternary structure, forms a cylinder of 14 subunits composed of two heptameric rings stacked back-to-back. Interacts with the co-chaperonin GroES.

It localises to the cytoplasm. It carries out the reaction ATP + H2O + a folded polypeptide = ADP + phosphate + an unfolded polypeptide.. Functionally, together with its co-chaperonin GroES, plays an essential role in assisting protein folding. The GroEL-GroES system forms a nano-cage that allows encapsulation of the non-native substrate proteins and provides a physical environment optimized to promote and accelerate protein folding. This chain is Chaperonin GroEL, found in Rhodobacter capsulatus (Rhodopseudomonas capsulata).